The following is a 577-amino-acid chain: ATP-dependent zinc metalloprotease FtsH (577 aa).

The Cytoplasmic segment spans residues 1 to 3 (MKK). A helical transmembrane segment spans residues 4–24 (LYWIILIAVVLACSGILMSLH). The Extracellular segment spans residues 25 to 98 (LSVTKEEMTY…IKVDNSDSYS (74 aa)). Residues 99–119 (ATKVIQIILIITVGTGVFLFI) form a helical membrane-spanning segment. The Cytoplasmic portion of the chain corresponds to 120–577 (RTSGGKDKPL…IDRICLKEAV (458 aa)). 186 to 193 (GPPGTGKT) contacts ATP. His-409 is a Zn(2+) binding site. Residue Glu-410 is part of the active site. His-413 and Asp-487 together coordinate Zn(2+).

This sequence in the central section; belongs to the AAA ATPase family. In the C-terminal section; belongs to the peptidase M41 family. Homohexamer. Zn(2+) serves as cofactor.

The protein localises to the cell membrane. Functionally, acts as a processive, ATP-dependent zinc metallopeptidase for both cytoplasmic and membrane proteins. Plays a role in the quality control of integral membrane proteins. The sequence is that of ATP-dependent zinc metalloprotease FtsH from Lachnoclostridium phytofermentans (strain ATCC 700394 / DSM 18823 / ISDg) (Clostridium phytofermentans).